The sequence spans 560 residues: Membrane protein insertase YidC (560 aa).

Residues 1 to 21 (MDIKRTILIAALAVVSYVMVL) form a helical membrane-spanning segment. Residues 42 to 66 (VAPGLPDGVPAGNNGASADVPSANA) are disordered. 5 helical membrane-spanning segments follow: residues 341-361 (LELT…FWLL), 367-387 (LLGN…GLFF), 437-457 (LGGC…YWVL), 468-488 (WILW…PIIM), and 515-535 (PIIF…YWVV).

The protein belongs to the OXA1/ALB3/YidC family. Type 1 subfamily. In terms of assembly, interacts with the Sec translocase complex via SecD. Specifically interacts with transmembrane segments of nascent integral membrane proteins during membrane integration.

It is found in the cell inner membrane. In terms of biological role, required for the insertion and/or proper folding and/or complex formation of integral membrane proteins into the membrane. Involved in integration of membrane proteins that insert both dependently and independently of the Sec translocase complex, as well as at least some lipoproteins. Aids folding of multispanning membrane proteins. This chain is Membrane protein insertase YidC, found in Pseudomonas putida (strain ATCC 47054 / DSM 6125 / CFBP 8728 / NCIMB 11950 / KT2440).